The chain runs to 82 residues: MKIHLIRHNTTLEFNNETSLLDHLEKNNIHHEYQCRSGYCGSCRVKIKKGKVSYKEMPLAFIQPDEILLCCCHVESDIEIDL.

Residues 1-82 (MKIHLIRHNT…HVESDIEIDL (82 aa)) form the 2Fe-2S ferredoxin-type domain. [2Fe-2S] cluster contacts are provided by C35, C40, C43, and C72.

Requires [2Fe-2S] cluster as cofactor.

This is an uncharacterized protein from Haemophilus influenzae (strain ATCC 51907 / DSM 11121 / KW20 / Rd).